A 207-amino-acid chain; its full sequence is Ras-related protein Rab-2A (207 aa).

12–20 is a binding site for GTP; sequence GDTGVGKSC. The short motif at 34–42 is the Effector region element; the sequence is HDLTIGVEF. Residues 60 to 64, 118 to 121, and 148 to 150 contribute to the GTP site; these read DTAGQ, NKSD, and SAK. The disordered stretch occupies residues 187-207; that stretch reads GAPTSKQDGTDQKPAGGGCCK. 2 S-geranylgeranyl cysteine lipidation sites follow: Cys205 and Cys206.

The protein belongs to the small GTPase superfamily. Rab family.

Its subcellular location is the cell membrane. It carries out the reaction GTP + H2O = GDP + phosphate + H(+). Regulated by guanine nucleotide exchange factors (GEFs) which promote the exchange of bound GDP for free GTP, GTPase activating proteins (GAPs) which increase the GTP hydrolysis activity, and GDP dissociation inhibitors which inhibit the dissociation of the nucleotide from the GTPase. The small GTPases Rab are key regulators of intracellular membrane trafficking, from the formation of transport vesicles to their fusion with membranes. Rabs cycle between active GTP-bound and inactive GDP-bound states. In their active state, drive transport of vesicular carriers from donor organelles to acceptor organelles to regulate the membrane traffic that maintains organelle identity and morphology. The chain is Ras-related protein Rab-2A (rab2A) from Dictyostelium discoideum (Social amoeba).